The sequence spans 1167 residues: RNA-directed RNA polymerase (1167 aa).

Residues Leu-553–Glu-735 enclose the RdRp catalytic domain.

Belongs to the reoviridae RNA-directed RNA polymerase family. In terms of assembly, interacts with VP3 (Potential). Interacts with VP2 (Potential). Interacts with NSP5; this interaction is probably necessary for the formation of functional virus factories.

It is found in the virion. The enzyme catalyses RNA(n) + a ribonucleoside 5'-triphosphate = RNA(n+1) + diphosphate. In terms of biological role, RNA-directed RNA polymerase that is involved in both transcription and genome replication. Together with VP3 capping enzyme, forms an enzyme complex positioned near the channels situated at each of the five-fold vertices of the core. Following infection, the outermost layer of the virus is lost, leaving a double-layered particle (DLP) made up of the core and VP6 shell. VP1 then catalyzes the transcription of fully conservative plus-strand genomic RNAs that are extruded through the DLP's channels into the cytoplasm where they function as mRNAs for translation of viral proteins. One copy of each of the viral (+)RNAs is also recruited during core assembly, together with newly synthesized polymerase complexes and VP2. The polymerase of these novo-formed particles catalyzes the synthesis of complementary minus-strands leading to dsDNA formation. To do so, the polymerase specifically recognizes conserved 3' sequence(s) in plus-strand RNA templates. Once dsRNA synthesis is complete, the polymerase switches to the transcriptional mode, thus providing secondary transcription. This is RNA-directed RNA polymerase from Rotavirus X (isolate RVX/Human/Bangladesh/NADRV-B219/2002/GXP[X]) (RV ADRV-N).